The primary structure comprises 307 residues: Undecaprenyl-diphosphatase 2 (307 aa).

A run of 8 helical transmembrane segments spans residues 19–41, 56–76, 117–137, 144–164, 208–228, 229–249, 251–271, and 285–305; these read GVTEFLPVSSTGHMIILGSIIGF, IHMFEIIIQLGAILAIVVLYW, FKFWTNIVVACIPAIVIGLPF, LLFFPAPVAAALMVGAVWMIF, IIGAWIVGVATVAGAEFSFFL, AIPMMLGASLLFLIKNSVVLS, VQILGLAVGFIVAFIVALVVV, and IFAVYRLAIGIIVLVLGFTKV.

This sequence belongs to the UppP family.

Its subcellular location is the cell membrane. It catalyses the reaction di-trans,octa-cis-undecaprenyl diphosphate + H2O = di-trans,octa-cis-undecaprenyl phosphate + phosphate + H(+). Functionally, catalyzes the dephosphorylation of undecaprenyl diphosphate (UPP). Confers resistance to bacitracin. The protein is Undecaprenyl-diphosphatase 2 of Clostridium acetobutylicum (strain ATCC 824 / DSM 792 / JCM 1419 / IAM 19013 / LMG 5710 / NBRC 13948 / NRRL B-527 / VKM B-1787 / 2291 / W).